A 140-amino-acid chain; its full sequence is Nucleoside diphosphate kinase (140 aa).

Residues Lys11, Phe59, Arg87, Thr93, Arg104, and Asn114 each contribute to the ATP site. His117 serves as the catalytic Pros-phosphohistidine intermediate.

Belongs to the NDK family. In terms of assembly, homotetramer. Requires Mg(2+) as cofactor.

It localises to the cytoplasm. It catalyses the reaction a 2'-deoxyribonucleoside 5'-diphosphate + ATP = a 2'-deoxyribonucleoside 5'-triphosphate + ADP. The catalysed reaction is a ribonucleoside 5'-diphosphate + ATP = a ribonucleoside 5'-triphosphate + ADP. Major role in the synthesis of nucleoside triphosphates other than ATP. The ATP gamma phosphate is transferred to the NDP beta phosphate via a ping-pong mechanism, using a phosphorylated active-site intermediate. The sequence is that of Nucleoside diphosphate kinase from Bartonella henselae (strain ATCC 49882 / DSM 28221 / CCUG 30454 / Houston 1) (Rochalimaea henselae).